Here is a 502-residue protein sequence, read N- to C-terminus: MEVEGKGGEAGTTTTTAPRRFALPVDAENKATTFRLFSVAKPHMRAFHLSWFQFFCCFVSTFAAPPLLPVIRENLNLTATDIGNAGIASVSGAVFARIVMGTACDLFGPRLASAALTLSTAPAVYFTAGIKSPIGFIMVRFFAGFSLATFVSTQFWMSSMFSGPVVGSANGIAAGWGNLGGGATQLIMPIVFSLIRNMGATKFTAWRIAFFIPGLFQTLSAFAVLLFGQDLPDGDYWAMHKSGEREKDDVGKVISNGIKNYRGWITALAYGYCFGVELTIDNIIAEYFFDRFHLKLQTAGIIAASFGLANFFARPGGGIFSDFMSRRFGMRGRLWAWWIVQTSGGVLCACLGQISSLTVSIIVMLVFSVFVQAACGLTFGVVPFISRRSLGVVSGMTGAGGNVGAVLTQLIFFKGSTYTRETGITLMGVMSIACSLPICLIYFPQWGGMFCGPSSKKVTEEDYYLAEWNDEEKEKNLHIGSQKFAETSISERGRATTTHPQT.

12 helical membrane passes run 51-71 (WFQF…LPVI), 87-107 (IASV…CDLF), 111-131 (LASA…AGIK), 133-153 (PIGF…FVST), 172-192 (IAAG…PIVF), 208-228 (IAFF…LLFG), 264-284 (WITA…DNII), 300-320 (GIIA…GGIF), 334-354 (LWAW…LGQI), 361-381 (IIVM…TFGV), 393-413 (VSGM…LIFF), and 423-443 (GITL…LIYF). Positions 477–502 (LHIGSQKFAETSISERGRATTTHPQT) are disordered.

It belongs to the major facilitator superfamily. Nitrate/nitrite porter (TC 2.A.1.8) family. Oligomeric molecular complex with NRT3.1. As to expression, expressed in roots, shoots and seeds. Expressed in leaves. Expressed in root hair zone of the primary root and the lateral roots, but not in the lateral root tip or in older parts of the roots. Detected mainly in the epidermis and the cortex. Expressed in shoots only in higher-order veins.

The protein resides in the cell membrane. Its function is as follows. Nitrate transporter involved in the constitutive high-affinity transport system (cHATS) under long-term N starvation conditions. Predominantly expressed in roots of nitrate-deprived plants as a 150 kDa molecular complex with NRT3.1 representing the major contributor to cHATS influx. The principal role of this cHATS is to enable roots previously deprived of nitrate to absorb this ion and initiate induction of nitrate-inducible genes. Not involved in transfer of nitrate from roots to shoots. Contributes to phloem loading of nitrate in shoots during N starvation, but not required for growth and nitrate uptake in young plants. Required for the nitrate uptake-independent plant growth promotion and lateral root response to the rhizospheric Phyllobacterium. Might be involved in the transfer of nitrate from stored pools to cytoplasm. This Arabidopsis thaliana (Mouse-ear cress) protein is High affinity nitrate transporter 2.5 (NRT2.5).